The following is a 431-amino-acid chain: Trigger factor (431 aa).

Residues 164–249 (GNIAVIDFKG…IKEIKVKELP (86 aa)) form the PPIase FKBP-type domain.

Belongs to the FKBP-type PPIase family. Tig subfamily.

It is found in the cytoplasm. The enzyme catalyses [protein]-peptidylproline (omega=180) = [protein]-peptidylproline (omega=0). Functionally, involved in protein export. Acts as a chaperone by maintaining the newly synthesized protein in an open conformation. Functions as a peptidyl-prolyl cis-trans isomerase. The protein is Trigger factor of Clostridium tetani (strain Massachusetts / E88).